We begin with the raw amino-acid sequence, 358 residues long: Type II restriction enzyme CviJI (358 aa).

Mg(2+) serves as cofactor.

The enzyme catalyses Endonucleolytic cleavage of DNA to give specific double-stranded fragments with terminal 5'-phosphates.. A P subtype restriction enzyme that recognizes the double-stranded sequence 5'-RGCY-3' and cleaves after G-2. In the presence of ATP, there is a relaxation of its specificity and it can cleave 5'-RGCN-3' and 5'-YGCY-3', but not 5'-YGCR-3' (R.CviJI* activity). The sequence is that of Type II restriction enzyme CviJI from Paramecium bursaria Chlorella virus IL3A (PBCV-IL3A).